A 171-amino-acid polypeptide reads, in one-letter code: UPF0312 protein SAR2769 (171 aa).

It belongs to the UPF0312 family.

The chain is UPF0312 protein SAR2769 from Staphylococcus aureus (strain MRSA252).